The sequence spans 346 residues: Fusaric acid resistance protein FusC (346 aa).

Transmembrane regions (helical) follow at residues 10-30 (VIIG…RYTG), 248-268 (VILA…VMLV), 291-311 (MGMG…GIYP), and 315-335 (GFVL…YMSL).

The protein belongs to the aromatic acid exporter ArAE (TC 2.A.85) family.

Its subcellular location is the cell membrane. Its function is as follows. Involved in the resistance (detoxification) of the fungal toxin fusaric acid. The chain is Fusaric acid resistance protein FusC (fusC) from Burkholderia cepacia (Pseudomonas cepacia).